We begin with the raw amino-acid sequence, 453 residues long: Glutamyl-tRNA(Gln) amidotransferase subunit A (453 aa).

Active-site charge relay system residues include K55 and S130. S154 functions as the Acyl-ester intermediate in the catalytic mechanism.

Belongs to the amidase family. GatA subfamily. As to quaternary structure, heterotrimer of A, B and C subunits.

The enzyme catalyses L-glutamyl-tRNA(Gln) + L-glutamine + ATP + H2O = L-glutaminyl-tRNA(Gln) + L-glutamate + ADP + phosphate + H(+). Its function is as follows. Allows the formation of correctly charged Gln-tRNA(Gln) through the transamidation of misacylated Glu-tRNA(Gln) in organisms which lack glutaminyl-tRNA synthetase. The reaction takes place in the presence of glutamine and ATP through an activated gamma-phospho-Glu-tRNA(Gln). This is Glutamyl-tRNA(Gln) amidotransferase subunit A from Aliarcobacter butzleri (strain RM4018) (Arcobacter butzleri).